We begin with the raw amino-acid sequence, 166 residues long: NAD(P)H-quinone oxidoreductase subunit I, chloroplastic (166 aa).

2 4Fe-4S ferredoxin-type domains span residues 55–84 and 95–124; these read GRIHFEFDKCIACEVCVRVCPIDLPVVDWK and LNYSIDFGICIFCGNCVEYCPTNCLSMTEE. Positions 64, 67, 70, 74, 104, 107, 110, and 114 each coordinate [4Fe-4S] cluster.

Belongs to the complex I 23 kDa subunit family. As to quaternary structure, NDH is composed of at least 16 different subunits, 5 of which are encoded in the nucleus. Requires [4Fe-4S] cluster as cofactor.

The protein localises to the plastid. Its subcellular location is the chloroplast thylakoid membrane. The catalysed reaction is a plastoquinone + NADH + (n+1) H(+)(in) = a plastoquinol + NAD(+) + n H(+)(out). It catalyses the reaction a plastoquinone + NADPH + (n+1) H(+)(in) = a plastoquinol + NADP(+) + n H(+)(out). Functionally, NDH shuttles electrons from NAD(P)H:plastoquinone, via FMN and iron-sulfur (Fe-S) centers, to quinones in the photosynthetic chain and possibly in a chloroplast respiratory chain. The immediate electron acceptor for the enzyme in this species is believed to be plastoquinone. Couples the redox reaction to proton translocation, and thus conserves the redox energy in a proton gradient. In Pentanema britannica (British yellowhead), this protein is NAD(P)H-quinone oxidoreductase subunit I, chloroplastic.